Consider the following 418-residue polypeptide: Protein FAM53A (418 aa).

2 disordered regions span residues 198–236 (TSPV…FNPR) and 248–269 (ETGN…LSRR). Residues 205 to 229 (SSASSGFVDSSEGSTSSSTRWNSGG) are compositionally biased toward low complexity. Over residues 248–265 (ETGNLLPSANSTPTSTPE) the composition is skewed to polar residues. A Nuclear localization signal motif is present at residues 285 to 293 (KKSRLKRRR).

The protein belongs to the FAM53 family.

Its subcellular location is the nucleus. Functionally, may play an important role in neural development; the dorsomedial roof of the third ventricle. In Gallus gallus (Chicken), this protein is Protein FAM53A.